The primary structure comprises 77 residues: Acyl carrier protein (77 aa).

Positions 1-77 constitute a Carrier domain; sequence MSVEAKVKKI…DAIEYIRKKS (77 aa). Ser37 is subject to O-(pantetheine 4'-phosphoryl)serine.

It belongs to the acyl carrier protein (ACP) family. Post-translationally, 4'-phosphopantetheine is transferred from CoA to a specific serine of apo-ACP by AcpS. This modification is essential for activity because fatty acids are bound in thioester linkage to the sulfhydryl of the prosthetic group.

It localises to the cytoplasm. Its pathway is lipid metabolism; fatty acid biosynthesis. Carrier of the growing fatty acid chain in fatty acid biosynthesis. This Desulforapulum autotrophicum (strain ATCC 43914 / DSM 3382 / VKM B-1955 / HRM2) (Desulfobacterium autotrophicum) protein is Acyl carrier protein.